We begin with the raw amino-acid sequence, 215 residues long: Large ribosomal subunit protein uL3 (215 aa).

The interval 124–164 (KRHGFSRGPMTHGSKNHREPGSTGAGTTPGRIYPGKRMAGR) is disordered.

This sequence belongs to the universal ribosomal protein uL3 family. In terms of assembly, part of the 50S ribosomal subunit. Forms a cluster with proteins L14 and L19.

One of the primary rRNA binding proteins, it binds directly near the 3'-end of the 23S rRNA, where it nucleates assembly of the 50S subunit. The polypeptide is Large ribosomal subunit protein uL3 (Synechococcus sp. (strain RCC307)).